Consider the following 377-residue polypeptide: Flap endonuclease 1 (377 aa).

Positions 1 to 105 are N-domain; that stretch reads MGIKGLSQVI…GELAKRASRQ (105 aa). Asp34 lines the Mg(2+) pocket. Positions 47 and 71 each coordinate DNA. Asp87 contributes to the Mg(2+) binding site. Residues 96–115 form a disordered region; it reads GELAKRASRQQKAREEREEA. Residues 123–254 are I-domain; the sequence is MVDKFAKRTV…ARAVELIRQH (132 aa). 4 residues coordinate Mg(2+): Glu159, Glu161, Asp180, and Asp182. A DNA-binding site is contributed by Glu159. DNA contacts are provided by Gly232 and Asp234. Residue Asp234 participates in Mg(2+) binding. The segment at 337 to 345 is interaction with PCNA; the sequence is PQGRLDSFF. The disordered stretch occupies residues 350–377; it reads STKKEKEKPKAAAKRKRDTKSSAPKKKR. Basic residues predominate over residues 360-377; sequence AAAKRKRDTKSSAPKKKR.

The protein belongs to the XPG/RAD2 endonuclease family. FEN1 subfamily. As to quaternary structure, interacts with PCNA. Three molecules of rad2 bind to one PCNA trimer with each molecule binding to one PCNA monomer. PCNA stimulates the nuclease activity without altering cleavage specificity. Requires Mg(2+) as cofactor. Post-translationally, phosphorylated. Phosphorylation upon DNA damage induces relocalization to the nuclear plasma.

The protein resides in the nucleus. The protein localises to the nucleolus. Its subcellular location is the nucleoplasm. It is found in the mitochondrion. In terms of biological role, structure-specific nuclease with 5'-flap endonuclease and 5'-3' exonuclease activities involved in DNA replication and repair. During DNA replication, cleaves the 5'-overhanging flap structure that is generated by displacement synthesis when DNA polymerase encounters the 5'-end of a downstream Okazaki fragment. It enters the flap from the 5'-end and then tracks to cleave the flap base, leaving a nick for ligation. Also involved in the long patch base excision repair (LP-BER) pathway, by cleaving within the apurinic/apyrimidinic (AP) site-terminated flap. Acts as a genome stabilization factor that prevents flaps from equilibrating into structures that lead to duplications and deletions. Also possesses 5'-3' exonuclease activity on nicked or gapped double-stranded DNA, and exhibits RNase H activity. Also involved in replication and repair of rDNA and in repairing mitochondrial DNA. This chain is Flap endonuclease 1, found in Schizosaccharomyces japonicus (strain yFS275 / FY16936) (Fission yeast).